The primary structure comprises 217 residues: Pre-mRNA-splicing factor sap62 (217 aa).

The Matrin-type zinc finger occupies Phe-54–Arg-84.

It belongs to the SF3A2 family. Belongs to the 40S cdc5-associated complex (or cwf complex), a spliceosome sub-complex reminiscent of a late-stage spliceosome composed of the U2, U5 and U6 snRNAs and at least brr2, cdc5, cwf2/prp3, cwf3/syf1, cwf4/syf3, cwf5/ecm2, spp42/cwf6, cwf7/spf27, cwf8, cwf9, cwf10, cwf11, cwf12, prp45/cwf13, cwf14, cwf15, cwf16, cwf17, cwf18, cwf19, cwf20, cwf21, cwf22, cwf23, cwf24, cwf25, cwf26, cyp7/cwf27, cwf28, cwf29/ist3, lea1, msl1, prp5/cwf1, prp10, prp12/sap130, prp17, prp22, sap61, sap62, sap114, sap145, slu7, smb1, smd1, smd3, smf1, smg1 and syf2.

The protein resides in the nucleus. Its subcellular location is the cytoplasm. In terms of biological role, involved in mRNA splicing where it associates with cdc5 and the other cwf proteins as part of the spliceosome. The sequence is that of Pre-mRNA-splicing factor sap62 (sap62) from Schizosaccharomyces pombe (strain 972 / ATCC 24843) (Fission yeast).